The sequence spans 336 residues: MGNCLHRAELSPSTENSSQLDFEDVWNSSYGVNDSFPDGDYGANLEAAAPCHSCNLLDDSALPFFILTSVLGILASSTVLFMLFRPLFRWQLCPGWPVLAQLAVGSALFSIVVPVLAPGLGSTRSSALCSLGYCVWYGSAFAQALLLGCHASLGHRLGAGQVPGLTLGLTVGIWGVAALLTLPVTLASGASGGLCTLIYSTELKALQATHTVACLAIFVLLPLGLFGAKGLKKALGMGPGPWMNILWAWFIFWWPHGVVLGLDFLVRSKLLLLSTCLAQQALDLLLNLAEALAILHCVATPLLLALFCHQATRTLLPSLPLPEGWSSHLDTLGSKS.

The mediates Plasmodium vivax Duffy receptor (PVDR) binding stretch occupies residues 1-30 (MGNCLHRAELSPSTENSSQLDFEDVWNSSY). Over 1-63 (MGNCLHRAEL…CNLLDDSALP (63 aa)) the chain is Extracellular. N-linked (GlcNAc...) asparagine glycosylation is present at N16. Y30 is subject to Sulfotyrosine. A glycan (N-linked (GlcNAc...) asparagine) is linked at N33. A Sulfotyrosine modification is found at Y41. Disulfide bonds link C51–C276 and C129–C195. The helical transmembrane segment at 64 to 84 (FFILTSVLGILASSTVLFMLF) threads the bilayer. The Cytoplasmic segment spans residues 85 to 95 (RPLFRWQLCPG). Residues 96–116 (WPVLAQLAVGSALFSIVVPVL) form a helical membrane-spanning segment. Topologically, residues 117 to 129 (APGLGSTRSSALC) are extracellular. The helical transmembrane segment at 130 to 153 (SLGYCVWYGSAFAQALLLGCHASL) threads the bilayer. Over 154 to 166 (GHRLGAGQVPGLT) the chain is Cytoplasmic. Residues 167-187 (LGLTVGIWGVAALLTLPVTLA) form a helical membrane-spanning segment. The Extracellular portion of the chain corresponds to 188–207 (SGASGGLCTLIYSTELKALQ). The helical transmembrane segment at 208–228 (ATHTVACLAIFVLLPLGLFGA) threads the bilayer. Topologically, residues 229–244 (KGLKKALGMGPGPWMN) are cytoplasmic. A helical transmembrane segment spans residues 245 to 265 (ILWAWFIFWWPHGVVLGLDFL). Residues 266–287 (VRSKLLLLSTCLAQQALDLLLN) are Extracellular-facing. A helical membrane pass occupies residues 288–308 (LAEALAILHCVATPLLLALFC). The Cytoplasmic segment spans residues 309–336 (HQATRTLLPSLPLPEGWSSHLDTLGSKS).

Belongs to the G-protein coupled receptor 1 family. Atypical chemokine receptor subfamily. (Microbial infection) Interacts (via N-terminal extracellular domain) with Plasmodium vivax Duffy receptor (PVDR) (via PvRII region). As to quaternary structure, (Microbial infection) Interacts (via N-terminal extracellular domain) with Plasmodium knowlesi Duffy receptor alpha form (DBPalpha) (via region II). In terms of processing, sulfation at Tyr-41 facilitates interaction with MGSA/CXCL1, RANTES/CCL5 and MCP-1/CCL2 but not IL8/CXCL8. Sulfation at Tyr-30 facilitates interaction with IL8/CXCL8. Post-translationally, (Microbial infection) Sulfation at Tyr-41 facilitates interaction with Plasmodium vivax Duffy receptor (PVDR). Sulfation at Tyr-30/Tyr-41 and Tyr-41 alone increases binding affinity of Plasmodium vivax parasites and likely promotes invasion of red blood cells. (Microbial infection) Sulfation at Tyr-41 facilitates interaction with Plasmodium knowlesi Duffy receptor alpha form (DBPalpha). Sulfation at Tyr-30/Tyr-41 and Tyr-41 alone increases binding affinity of Plasmodium knowlesi parasites and likely promotes invasion of red blood cells. Found in adult kidney, adult spleen, bone marrow and fetal liver. In particular, it is expressed along postcapillary venules throughout the body, except in the adult liver. Erythroid cells and postcapillary venule endothelium are the principle tissues expressing duffy. Fy(-A-B) individuals do not express duffy in the bone marrow, however they do, in postcapillary venule endothelium.

It is found in the early endosome. It localises to the recycling endosome. The protein localises to the membrane. Functionally, atypical chemokine receptor that controls chemokine levels and localization via high-affinity chemokine binding that is uncoupled from classic ligand-driven signal transduction cascades, resulting instead in chemokine sequestration, degradation, or transcytosis. Also known as interceptor (internalizing receptor) or chemokine-scavenging receptor or chemokine decoy receptor. Has a promiscuous chemokine-binding profile, interacting with inflammatory chemokines of both the CXC and the CC subfamilies but not with homeostatic chemokines. Acts as a receptor for chemokines including CCL2, CCL5, CCL7, CCL11, CCL13, CCL14, CCL17, CXCL5, CXCL6, IL8/CXCL8, CXCL11, GRO, RANTES, MCP-1 and TARC. May regulate chemokine bioavailability and, consequently, leukocyte recruitment through two distinct mechanisms: when expressed in endothelial cells, it sustains the abluminal to luminal transcytosis of tissue-derived chemokines and their subsequent presentation to circulating leukocytes; when expressed in erythrocytes, serves as blood reservoir of cognate chemokines but also as a chemokine sink, buffering potential surges in plasma chemokine levels. Its function is as follows. (Microbial infection) Acts as a receptor for the malaria parasite Plasmodium vivax. In terms of biological role, (Microbial infection) Acts as a receptor for the malaria parasite Plasmodium knowlesi. The chain is Atypical chemokine receptor 1 (ACKR1) from Homo sapiens (Human).